Reading from the N-terminus, the 98-residue chain is Large ribosomal subunit protein uL23 (98 aa).

The protein belongs to the universal ribosomal protein uL23 family. In terms of assembly, part of the 50S ribosomal subunit. Contacts protein L29, and trigger factor when it is bound to the ribosome.

Functionally, one of the early assembly proteins it binds 23S rRNA. One of the proteins that surrounds the polypeptide exit tunnel on the outside of the ribosome. Forms the main docking site for trigger factor binding to the ribosome. In Bordetella petrii (strain ATCC BAA-461 / DSM 12804 / CCUG 43448), this protein is Large ribosomal subunit protein uL23.